Reading from the N-terminus, the 306-residue chain is tRNA-cytidine(32) 2-sulfurtransferase (306 aa).

A PP-loop motif motif is present at residues S49–S54. Residues C124, C127, and C215 each contribute to the [4Fe-4S] cluster site.

This sequence belongs to the TtcA family. In terms of assembly, homodimer. Mg(2+) serves as cofactor. The cofactor is [4Fe-4S] cluster.

It is found in the cytoplasm. The catalysed reaction is cytidine(32) in tRNA + S-sulfanyl-L-cysteinyl-[cysteine desulfurase] + AH2 + ATP = 2-thiocytidine(32) in tRNA + L-cysteinyl-[cysteine desulfurase] + A + AMP + diphosphate + H(+). It functions in the pathway tRNA modification. Catalyzes the ATP-dependent 2-thiolation of cytidine in position 32 of tRNA, to form 2-thiocytidine (s(2)C32). The sulfur atoms are provided by the cysteine/cysteine desulfurase (IscS) system. The polypeptide is tRNA-cytidine(32) 2-sulfurtransferase (Azoarcus sp. (strain BH72)).